The following is a 342-amino-acid chain: Ribosomal RNA small subunit methyltransferase H (342 aa).

S-adenosyl-L-methionine-binding positions include 36–38 (GGH), D56, F82, D100, and Q107. Residues 309–342 (ENRESGMGKGHGAAASRFPTPDSRFPTSPNGDAP) are disordered. Residues 333–342 (FPTSPNGDAP) are compositionally biased toward polar residues.

This sequence belongs to the methyltransferase superfamily. RsmH family.

It localises to the cytoplasm. It catalyses the reaction cytidine(1402) in 16S rRNA + S-adenosyl-L-methionine = N(4)-methylcytidine(1402) in 16S rRNA + S-adenosyl-L-homocysteine + H(+). Specifically methylates the N4 position of cytidine in position 1402 (C1402) of 16S rRNA. The polypeptide is Ribosomal RNA small subunit methyltransferase H (Xanthomonas campestris pv. campestris (strain 8004)).